A 546-amino-acid chain; its full sequence is 2-isopropylmalate synthase (546 aa).

The Pyruvate carboxyltransferase domain occupies 8–271 (ILIFDTTLRD…NSFFGRSSDS (264 aa)). Residues Asp17, His208, His210, and Asn244 each contribute to the Mn(2+) site. Residues 408 to 546 (QLSHVQVSCG…EKKVFSNPKN (139 aa)) are regulatory domain.

It belongs to the alpha-IPM synthase/homocitrate synthase family. LeuA type 1 subfamily. As to quaternary structure, homodimer. Requires Mn(2+) as cofactor.

Its subcellular location is the cytoplasm. It carries out the reaction 3-methyl-2-oxobutanoate + acetyl-CoA + H2O = (2S)-2-isopropylmalate + CoA + H(+). It participates in amino-acid biosynthesis; L-leucine biosynthesis; L-leucine from 3-methyl-2-oxobutanoate: step 1/4. In terms of biological role, catalyzes the condensation of the acetyl group of acetyl-CoA with 3-methyl-2-oxobutanoate (2-ketoisovalerate) to form 3-carboxy-3-hydroxy-4-methylpentanoate (2-isopropylmalate). This chain is 2-isopropylmalate synthase, found in Prochlorococcus marinus (strain MIT 9515).